The primary structure comprises 323 residues: Sporulation-delaying protein SdpB (323 aa).

The next 6 membrane-spanning stretches (helical) occupy residues 27–49 (LLGFSTLLVLLFNSTDILFSYSA), 70–92 (SINFEIIRYLMIFILTLVVIGWR), 112–134 (LTIDGGEQIATVLSFLILPVTLL), 155–177 (TVLFYIMTIIKIQVFIIYLNAAL), 219–241 (IVVITWLVTIFELFLAASIISNI), and 248–270 (LVLGILFHIGIIFSIGIVSFGLI).

Its subcellular location is the cell membrane. In terms of biological role, required for the maturation of SdpC to SDP. Not required for SdpC signal peptide cleavage, secretion from the cell or disulfide bond formation. The sequence is that of Sporulation-delaying protein SdpB from Bacillus subtilis (strain 168).